Consider the following 81-residue polypeptide: Putative CNGA1-overlapping antisense gene protein (81 aa).

In terms of tissue distribution, expressed in brain, notably in regions involved in long-term potentiation and long-term depression, such as hippocampal CA1 and CA3, dentate gyrus and cerebellar Purkinje layer.

This chain is Putative CNGA1-overlapping antisense gene protein, found in Homo sapiens (Human).